The chain runs to 595 residues: APOBEC1 complementation factor (595 aa).

RRM domains are found at residues Cys56–Asp134, Cys136–Pro218, and Lys231–Pro303. Residues His360–Arg409 form a required for nuclear localization region.

Part of the apolipoprotein B mRNA editing complex with APOBEC1. Interacts with TNPO2; TNPO2 may be responsible for transport of A1CF into the nucleus. Interacts with SYNCRIP. Interacts with CELF2/CUGBP2. Interacts with RBM47. In terms of tissue distribution, expressed primarily in liver, small intestine and kidney.

It localises to the nucleus. It is found in the endoplasmic reticulum. Its subcellular location is the cytoplasm. In terms of biological role, essential component of the apolipoprotein B mRNA editing enzyme complex which is responsible for the postranscriptional editing of a CAA codon for Gln to a UAA codon for stop in APOB mRNA. Binds to APOB mRNA and is probably responsible for docking the catalytic subunit, APOBEC1, to the mRNA to allow it to deaminate its target cytosine. The complex also seems to protect the edited APOB mRNA from nonsense-mediated decay. The polypeptide is APOBEC1 complementation factor (A1cf) (Mus musculus (Mouse)).